The primary structure comprises 754 residues: Endoribonuclease Dicer-like (754 aa).

One can recognise a PAZ domain in the interval 132–251; sequence QLMCDAKRLS…LPPELCLLLP (120 aa). RNase III domains follow at residues 298 to 418 and 613 to 734; these read FAIT…TGPN and AQTV…LACG. 6 residues coordinate Mn(2+): Glu336, Asp404, Glu407, Glu649, Asp720, and Glu723.

In terms of assembly, homodimer. The cofactor is Mg(2+). Mn(2+) is required as a cofactor.

Involved in cleaving double-stranded RNA in the RNA interference (RNAi) pathway. It produces 21 to 23 bp dsRNAs (siRNAs) which target the selective destruction of homologous RNAs. The protein is Endoribonuclease Dicer-like of Giardia intestinalis (strain ATCC 50803 / WB clone C6) (Giardia lamblia).